We begin with the raw amino-acid sequence, 156 residues long: 2-C-methyl-D-erythritol 2,4-cyclodiphosphate synthase (156 aa).

2 residues coordinate a divalent metal cation: Asp9 and His11. 4-CDP-2-C-methyl-D-erythritol 2-phosphate-binding positions include 9 to 11 and 35 to 36; these read DAH and HS. His43 contributes to the a divalent metal cation binding site. 57 to 59 provides a ligand contact to 4-CDP-2-C-methyl-D-erythritol 2-phosphate; sequence DIG.

This sequence belongs to the IspF family. As to quaternary structure, homotrimer. A divalent metal cation serves as cofactor.

It catalyses the reaction 4-CDP-2-C-methyl-D-erythritol 2-phosphate = 2-C-methyl-D-erythritol 2,4-cyclic diphosphate + CMP. It participates in isoprenoid biosynthesis; isopentenyl diphosphate biosynthesis via DXP pathway; isopentenyl diphosphate from 1-deoxy-D-xylulose 5-phosphate: step 4/6. Its function is as follows. Involved in the biosynthesis of isopentenyl diphosphate (IPP) and dimethylallyl diphosphate (DMAPP), two major building blocks of isoprenoid compounds. Catalyzes the conversion of 4-diphosphocytidyl-2-C-methyl-D-erythritol 2-phosphate (CDP-ME2P) to 2-C-methyl-D-erythritol 2,4-cyclodiphosphate (ME-CPP) with a corresponding release of cytidine 5-monophosphate (CMP). This Hydrogenobaculum sp. (strain Y04AAS1) protein is 2-C-methyl-D-erythritol 2,4-cyclodiphosphate synthase.